The following is a 476-amino-acid chain: Siroheme synthase 1 (476 aa).

Residues 1–203 (MDYLPIFADL…GQTAEAQRQL (203 aa)) form a precorrin-2 dehydrogenase /sirohydrochlorin ferrochelatase region. NAD(+)-binding positions include 22 to 23 (EV) and 43 to 44 (QS). S128 is modified (phosphoserine). A uroporphyrinogen-III C-methyltransferase region spans residues 219-476 (GEIALVGAGP…VSRPAVVNLA (258 aa)). Residue P228 coordinates S-adenosyl-L-methionine. D251 (proton acceptor) is an active-site residue. Residue K273 is the Proton donor of the active site. Residues 304-306 (GGD), I309, 334-335 (TA), M386, and G415 contribute to the S-adenosyl-L-methionine site.

The protein in the N-terminal section; belongs to the precorrin-2 dehydrogenase / sirohydrochlorin ferrochelatase family. This sequence in the C-terminal section; belongs to the precorrin methyltransferase family.

The enzyme catalyses uroporphyrinogen III + 2 S-adenosyl-L-methionine = precorrin-2 + 2 S-adenosyl-L-homocysteine + H(+). It catalyses the reaction precorrin-2 + NAD(+) = sirohydrochlorin + NADH + 2 H(+). The catalysed reaction is siroheme + 2 H(+) = sirohydrochlorin + Fe(2+). Its pathway is cofactor biosynthesis; adenosylcobalamin biosynthesis; precorrin-2 from uroporphyrinogen III: step 1/1. It participates in cofactor biosynthesis; adenosylcobalamin biosynthesis; sirohydrochlorin from precorrin-2: step 1/1. The protein operates within porphyrin-containing compound metabolism; siroheme biosynthesis; precorrin-2 from uroporphyrinogen III: step 1/1. It functions in the pathway porphyrin-containing compound metabolism; siroheme biosynthesis; siroheme from sirohydrochlorin: step 1/1. Its pathway is porphyrin-containing compound metabolism; siroheme biosynthesis; sirohydrochlorin from precorrin-2: step 1/1. Its function is as follows. Multifunctional enzyme that catalyzes the SAM-dependent methylations of uroporphyrinogen III at position C-2 and C-7 to form precorrin-2 via precorrin-1. Then it catalyzes the NAD-dependent ring dehydrogenation of precorrin-2 to yield sirohydrochlorin. Finally, it catalyzes the ferrochelation of sirohydrochlorin to yield siroheme. The sequence is that of Siroheme synthase 1 from Serratia proteamaculans (strain 568).